Consider the following 398-residue polypeptide: MGWKTLDDMDLTGKRVLVRVDINVPIVDGVVTDSTRIRRLMPTIRDILAAGGRPILLAHFGRPGGERRKNLSLGQLVPTLERAFETKVLFADDCVGPAAEEAAEALQPGQVLLLENTRFHASETKNDPDLAAGMARLGDIYCNDAFSAAHRAHSSTEAIARLLPSCAGRLMQAELEALEKALGKPERPVTAVVGGAKVSTKLELLGNLIEKVDYLVIGGGMANTFLVAKGLPVGKSLAERIMKDTAAEILAKAEAAGCTIVLPSDVVVAEKFESHAPHQILPNDRCPDEGMILDAGPDSLAAIKAIFEKSRTLIWNGPLGAFELEPFDAATNAAALKAAALTRAGKLISVAGGGDTVAALNASGAAGDFTYISTAGGAFLEWMEGKTLPGVAALIQAG.

Substrate-binding positions include 21-23, Arg-36, 59-62, Arg-118, and Arg-151; these read DIN and HFGR. Residues Lys-201, Glu-323, and 353–356 contribute to the ATP site; that span reads GGDT.

The protein belongs to the phosphoglycerate kinase family. As to quaternary structure, monomer.

It localises to the cytoplasm. The enzyme catalyses (2R)-3-phosphoglycerate + ATP = (2R)-3-phospho-glyceroyl phosphate + ADP. It functions in the pathway carbohydrate degradation; glycolysis; pyruvate from D-glyceraldehyde 3-phosphate: step 2/5. The sequence is that of Phosphoglycerate kinase from Ruegeria pomeroyi (strain ATCC 700808 / DSM 15171 / DSS-3) (Silicibacter pomeroyi).